Reading from the N-terminus, the 175-residue chain is Disulfide bond formation protein B (175 aa).

Residues 1–13 (MVSNWLDAAPRRV) are Cytoplasmic-facing. Residues 14–30 (LALISAACIAMLAFGMY) traverse the membrane as a helical segment. Topologically, residues 31 to 48 (LQHVVGLEPCPMCIVQRY) are periplasmic. A disulfide bridge connects residues Cys-40 and Cys-43. The helical transmembrane segment at 49–65 (ALIGVAVFTGLGSLRGG) threads the bilayer. Residues 66 to 70 (RGWWM) lie on the Cytoplasmic side of the membrane. The chain crosses the membrane as a helical span at residues 71–88 (TWGVLALLLSGFGAFVAA). Over 89-144 (RQSWLQWYPPEIATCGRDFYGMIENFPISRAIPMIFRGSGDCAAIDWTFLGGSIAN) the chain is Periplasmic. An intrachain disulfide couples Cys-103 to Cys-130. The chain crosses the membrane as a helical span at residues 145–163 (WSFVCFVVMALVLLVMLLR). Residues 164–175 (APRPARGGFSAA) are Cytoplasmic-facing.

Belongs to the DsbB family.

It is found in the cell inner membrane. In terms of biological role, required for disulfide bond formation in some periplasmic proteins. Acts by oxidizing the DsbA protein. The chain is Disulfide bond formation protein B from Paracidovorax citrulli (strain AAC00-1) (Acidovorax citrulli).